Here is a 207-residue protein sequence, read N- to C-terminus: Ribonuclease HII (207 aa).

The RNase H type-2 domain maps to 18-207; sequence TYLSGSDEAG…PIKKISKETS (190 aa). Positions 24, 25, and 116 each coordinate a divalent metal cation.

The protein belongs to the RNase HII family. It depends on Mn(2+) as a cofactor. Requires Mg(2+) as cofactor.

The protein resides in the cytoplasm. The catalysed reaction is Endonucleolytic cleavage to 5'-phosphomonoester.. Its function is as follows. Endonuclease that specifically degrades the RNA of RNA-DNA hybrids. The chain is Ribonuclease HII from Mycoplasma mycoides subsp. mycoides SC (strain CCUG 32753 / NCTC 10114 / PG1).